The sequence spans 303 residues: Acetyltransferase ataH (303 aa).

An N-terminal signal peptide occupies residues 1–23 (MPTTAAFLRALYILTTLRGIGTS). 3 helical membrane passes run 42-62 (FLLH…MMTF), 194-214 (LVFA…GIML), and 257-277 (GYIW…FPLF).

The protein belongs to the wax synthase family.

The protein localises to the membrane. Its pathway is mycotoxin biosynthesis. Functionally, acetyltransferase; part of the gene cluster that mediates the biosynthesis of acetylaranotin, a member of the epipolythiodioxopiperazine (ETP) class of toxins characterized by a disulfide-bridged cyclic dipeptide. The first step of acetylaranotin biosynthesis is performed by the NRPS ataP which produces diketopiperazine cyclo-L-Phe-L-Phe via the condensation of 2 phenylalanines (L-Phe). The ataC domain of ataTC then catalyzes the formation of bishydroxylation of cyclo-L-Phe-L-Phe. The glutathione S-transferase domain ataG in ataIMG further catalyzes the conjugation of two glutathiones to the bishydroxylated intermediate. Next, the dipeptidase ataJ removes the Glu residues. The following step is performed by the carbon sulfur lyase domain ataI of ataIMG which may convert the bis-cysteinyl adduct to yield an epidithiol intermediate. The ataT domain from ataTC then catalyzes the oxidation of the free dithiols, followed by a cyclization step catalyzed by the cytochrome P450 ataF. AtaF probably acts as an epoxidase to promote a dual epoxidation formation at C8 and C9 along with C8' and C9', followed by the spontaneous nucleophilic attack of the amide nitrogens N10 and N10' to yield an intermediate with the pyrrolidine partial structure. The final steps of acetylaranotin biosynthesis involve the acetylation and ring rearrangement of an epitetrathiodiketopiperazine intermediate to produce acetylaranotin. AtaH probably catalyzes the acetylation of epitetrathiodiketopiperazine to produce a diacetate and ataY is responsible for the formation of the dihydrooxepin moiety that converts the diacetate intermediate to acetylaranotin via acetylapoaranotin. Both enzymes could function independently in the absence of the other. The acetylaranotin bis-thiomethyltransferase ataS located outside of acetylaranotin gene cluster is the main thiomethyltransferase responsible for converting acetylaranotin and its related intermediates to their methylated forms. The protein is Acetyltransferase ataH of Aspergillus terreus (strain NIH 2624 / FGSC A1156).